Consider the following 281-residue polypeptide: Alcohol dehydrogenase-related 31 kDa protein (281 aa).

11–34 provides a ligand contact to NAD(+); it reads YVADCGGIALETSKVLMTKNIAKL. Position 139 (S139) interacts with substrate. The active-site Proton acceptor is the Y152.

It belongs to the short-chain dehydrogenases/reductases (SDR) family.

This Drosophila ambigua (Fruit fly) protein is Alcohol dehydrogenase-related 31 kDa protein (Adhr).